The primary structure comprises 331 residues: 6-phosphogluconolactonase (331 aa).

It belongs to the cycloisomerase 2 family.

The catalysed reaction is 6-phospho-D-glucono-1,5-lactone + H2O = 6-phospho-D-gluconate + H(+). It participates in carbohydrate degradation; pentose phosphate pathway; D-ribulose 5-phosphate from D-glucose 6-phosphate (oxidative stage): step 2/3. Its function is as follows. Catalyzes the hydrolysis of 6-phosphogluconolactone to 6-phosphogluconate. The protein is 6-phosphogluconolactonase of Enterobacter sp. (strain 638).